A 486-amino-acid chain; its full sequence is Ribulose bisphosphate carboxylase large chain (486 aa).

Residues Asn-125 and Thr-175 each coordinate substrate. Lys-177 acts as the Proton acceptor in catalysis. Position 179 (Lys-179) interacts with substrate. The Mg(2+) site is built by Lys-203, Asp-205, and Glu-206. Residue Lys-203 is modified to N6-carboxylysine. His-295 serves as the catalytic Proton acceptor. Residues Arg-296, His-328, and Ser-380 each coordinate substrate.

Belongs to the RuBisCO large chain family. Type I subfamily. As to quaternary structure, heterohexadecamer of 8 large chains and 8 small chains. The cofactor is Mg(2+).

It catalyses the reaction 2 (2R)-3-phosphoglycerate + 2 H(+) = D-ribulose 1,5-bisphosphate + CO2 + H2O. The catalysed reaction is D-ribulose 1,5-bisphosphate + O2 = 2-phosphoglycolate + (2R)-3-phosphoglycerate + 2 H(+). In terms of biological role, ruBisCO catalyzes two reactions: the carboxylation of D-ribulose 1,5-bisphosphate, the primary event in carbon dioxide fixation, as well as the oxidative fragmentation of the pentose substrate. Both reactions occur simultaneously and in competition at the same active site. In Aurantimonas manganoxydans (strain ATCC BAA-1229 / DSM 21871 / SI85-9A1), this protein is Ribulose bisphosphate carboxylase large chain.